A 928-amino-acid polypeptide reads, in one-letter code: ATP-dependent DNA helicase PIF5 (928 aa).

The transit peptide at 1–49 (MLSRLSAVWRPSRVALRIQRVDFTTCGNRLNRSTQPNEPPLVSGIAARS) directs the protein to the mitochondrion. Disordered stretches follow at residues 29 to 141 (RLNR…DVAI) and 176 to 231 (LRAK…FSDA). Positions 52–61 (AKAEPVEKRG) are enriched in basic and acidic residues. 264–271 (GGAGSGKS) provides a ligand contact to ATP. 4 disordered regions span residues 389 to 421 (PIPPRNKPQQKTEENAEAQEGGDPTDGTPAPSK), 481 to 513 (KSSAKSRKKKDEDAGNDGVLPLTDAETTPAAAE), 545 to 572 (IYPSPNDGSSQQTGSSNGANSVTEEDTM), and 585 to 607 (STHETEPETTEETTTGTQPSQPW). Polar residues predominate over residues 550 to 566 (NDGSSQQTGSSNGANSV). Residues 858 to 877 (QAYVALSRSTRLDNIRLLDF) mediate DNA binding. Residues 898 to 928 (EELDNEIEDDGTEGDEEALEGDGEYEGEVEE) form a disordered region.

It belongs to the helicase family. PIF1 subfamily. As to quaternary structure, monomer. Requires Mg(2+) as cofactor.

It localises to the mitochondrion. It carries out the reaction Couples ATP hydrolysis with the unwinding of duplex DNA at the replication fork by translocating in the 5'-3' direction. This creates two antiparallel DNA single strands (ssDNA). The leading ssDNA polymer is the template for DNA polymerase III holoenzyme which synthesizes a continuous strand.. The catalysed reaction is ATP + H2O = ADP + phosphate + H(+). DNA-dependent ATPase and 5'-3' DNA helicase required for the maintenance of mitochondrial (kinetoplast) genome stability. Involved in processing of minicircle Okazaki fragments. The sequence is that of ATP-dependent DNA helicase PIF5 from Trypanosoma brucei brucei (strain 927/4 GUTat10.1).